Here is a 1487-residue protein sequence, read N- to C-terminus: Secretory phospholipase A2 receptor (1487 aa).

Positions 1–26 (MVQWLAMLQLLWLQQLLLLGIHQGIA) are cleaved as a signal peptide. Over 27–1396 (QDLTHIQEPS…AQPEKGLSHS (1370 aa)) the chain is Extracellular. Residues 42–165 (KGIFIIQSES…SSGGDICEHP (124 aa)) enclose the Ricin B-type lectin domain. Disulfide bonds link Cys55/Cys68, Cys93/Cys110, Cys181/Cys207, and Cys195/Cys222. Asn97 carries N-linked (GlcNAc...) asparagine glycosylation. Residues 176-224 (AHGMPCVFPFQFKGHWHHDCIREGQKEHLLWCATTSRYEEDEKWGFCPD) form the Fibronectin type-II domain. N-linked (GlcNAc...) asparagine glycosylation occurs at Asn239. C-type lectin domains lie at 241-357 (SSRI…YICK), 387-504 (FNRK…YICK), 524-643 (HGRF…MSLC), 673-797 (GLAS…WICR), 819-938 (YQNA…SICK), and 964-1095 (FNYK…GFVC). 10 cysteine pairs are disulfide-bonded: Cys263/Cys356, Cys333/Cys348, Cys408/Cys503, Cys480/Cys495, Cys617/Cys634, Cys699/Cys796, Cys774/Cys788, Cys840/Cys937, Cys914/Cys929, and Cys1066/Cys1086. Asn928 is a glycosylation site (N-linked (GlcNAc...) asparagine). N-linked (GlcNAc...) asparagine glycans are attached at residues Asn1107, Asn1122, and Asn1131. 2 C-type lectin domains span residues 1120–1231 (YGNR…GAIC) and 1256–1377 (FKGN…FICK). 3 disulfide bridges follow: Cys1208–Cys1222, Cys1279–Cys1376, and Cys1353–Cys1368. Residues 1397–1417 (IVPVTVTLTLIIALGIFMLCF) traverse the membrane as a helical segment. Topologically, residues 1418–1487 (WIYKQKSDIF…HKGRPICISP (70 aa)) are cytoplasmic. An Endocytosis signal motif is present at residues 1435-1441 (GSYYPTL). Residues 1463–1475 (DEEVRDAPATESK) show a composition bias toward basic and acidic residues. The interval 1463–1487 (DEEVRDAPATESKRGHKGRPICISP) is disordered.

In terms of assembly, interacts with sPLA2-IB/PLA2G1B; this interaction mediates intracellular signaling as well as clearance of extracellular sPLA2-IB/PLA2G1B via endocytotic pathway. Interacts with sPLA2-X/PLA2G10; this interaction mediates sPLA2-X/PLA2G10 clearance and inactivation. Post-translationally, the secretory phospholipase A2 receptor form may be produced by the action of metalloproteinases. It contains all extracellular domains and only lacks transmembrane and cytosolic regions. It is however unclear whether this form is produced by proteolytic cleavage as suggested by some experiments reported by PubMed:11830583, or by alternative splicing. Widely expressed. Present in type II alveolar epithelial cells and a subset of splenic lymphocytes. Present at the surface of polymorphonuclear neutrophils (at protein level).

It localises to the cell membrane. It is found in the secreted. Its function is as follows. Receptor for secretory phospholipase A2 (sPLA2). Acts as a receptor for phospholipases sPLA2-IB/PLA2G1B, sPLA2-X/PLA2G10 and, with lower affinity, sPLA2-IIA/PLA2G2A. Also able to bind to snake PA2-like toxins. Although its precise function remains unclear, binding of sPLA2 to its receptor participates in both positive and negative regulation of sPLA2 functions as well as clearance of sPLA2. Binding of sPLA2-IB/PLA2G1B induces various effects depending on the cell type, such as activation of the mitogen-activated protein kinase (MAPK) cascade to induce cell proliferation, the production of lipid mediators, selective release of arachidonic acid in bone marrow-derived mast cells. In neutrophils, binding of sPLA2-IB/PLA2G1B can activate p38 MAPK to stimulate elastase release and cell adhesion. May be involved in responses in pro-inflammatory cytokine productions during endotoxic shock. Also has endocytic properties and rapidly internalizes sPLA2 ligands, which is particularly important for the clearance of extracellular sPLA2s to protect their potent enzymatic activities. The soluble secretory phospholipase A2 receptor form is circulating and acts as a negative regulator of sPLA2 functions by blocking the biological functions of sPLA2-IB/PLA2G1B and sPLA2-X/PLA2G10. In podocytes, binding of sPLA2-IB/PLA2G1B can regulate podocyte survival and glomerular homeostasis. The chain is Secretory phospholipase A2 receptor (Pla2r1) from Mus musculus (Mouse).